The sequence spans 258 residues: Tryptophan synthase alpha chain (258 aa).

Catalysis depends on proton acceptor residues glutamate 47 and aspartate 58.

It belongs to the TrpA family. As to quaternary structure, tetramer of two alpha and two beta chains.

It catalyses the reaction (1S,2R)-1-C-(indol-3-yl)glycerol 3-phosphate + L-serine = D-glyceraldehyde 3-phosphate + L-tryptophan + H2O. It functions in the pathway amino-acid biosynthesis; L-tryptophan biosynthesis; L-tryptophan from chorismate: step 5/5. Its function is as follows. The alpha subunit is responsible for the aldol cleavage of indoleglycerol phosphate to indole and glyceraldehyde 3-phosphate. The polypeptide is Tryptophan synthase alpha chain (Bacillus mycoides (strain KBAB4) (Bacillus weihenstephanensis)).